Here is a 199-residue protein sequence, read N- to C-terminus: Charged multivesicular body protein 1B2 (199 aa).

Positions 15 to 47 (AKELNRNAKKCDKEEKAEKAKIKKAIQKGNTEV) form a coiled coil. Positions 132–156 (MEDTMSSTTTLTTPQNQVDMLLQEM) are interaction with IST1. Positions 167 to 199 (ELPQGQTGSVGASVASTEQDELSQRLARLRDQV) are disordered. Positions 170 to 183 (QGQTGSVGASVAST) are enriched in polar residues. Residues 174–199 (GSVGASVASTEQDELSQRLARLRDQV) are interaction with SPAST. Residues 177–199 (GASVASTEQDELSQRLARLRDQV) are a coiled coil. The segment at 180–196 (VASTEQDELSQRLARLR) is interaction with VPS4A, MITD1 and STAMBP. Residues 180 to 199 (VASTEQDELSQRLARLRDQV) are interaction with VTA1. Residues 183 to 199 (TEQDELSQRLARLRDQV) form an interaction with VPS4B region. The short motif at 186 to 196 (DELSQRLARLR) is the MIT-interacting motif element.

This sequence belongs to the SNF7 family. In terms of assembly, probable peripherally associated component of the endosomal sorting required for transport complex III (ESCRT-III). ESCRT-III components are thought to multimerize to form a flat lattice on the perimeter membrane of the endosome. Several assembly forms of ESCRT-III may exist that interact and act sequentially. Interacts with CHMP1A. Interacts with VTA1; the interaction probably involves the open conformation of CHMP1B. Interacts with CHMP2A. Interacts with VPS4A; the interaction is direct. Interacts with VPS4B; the interaction is direct. Interacts with SPAST (via MIT domain); the interaction is direct. Interacts with IST1. Interacts with MITD1. Interacts with STAMBP.

The protein resides in the cytoplasm. The protein localises to the cytosol. It is found in the endosome. It localises to the late endosome membrane. Functionally, probable peripherally associated component of the endosomal sorting required for transport complex III (ESCRT-III) which is involved in multivesicular bodies (MVBs) formation and sorting of endosomal cargo proteins into MVBs. MVBs contain intraluminal vesicles (ILVs) that are generated by invagination and scission from the limiting membrane of the endosome and mostly are delivered to lysosomes enabling degradation of membrane proteins, such as stimulated growth factor receptors, lysosomal enzymes and lipids. The MVB pathway appears to require the sequential function of ESCRT-O, -I,-II and -III complexes. ESCRT-III proteins mostly dissociate from the invaginating membrane before the ILV is released. The ESCRT machinery also functions in topologically equivalent membrane fission events, such as the terminal stages of cytokinesis. ESCRT-III proteins are believed to mediate the necessary vesicle extrusion and/or membrane fission activities, possibly in conjunction with the AAA ATPase VPS4. Involved in cytokinesis. Involved in recruiting VPS4A and/or VPS4B and SPAST to the midbody of dividing cells. This chain is Charged multivesicular body protein 1B2, found in Mus musculus (Mouse).